The sequence spans 606 residues: Probable methyltransferase PMT5 (606 aa).

The Cytoplasmic portion of the chain corresponds to 1–20; it reads MRGSWYKSVSSVFGLRPRIR. A helical; Signal-anchor for type II membrane protein transmembrane segment spans residues 21 to 41; sequence GLLFFIVGVVALVTILAPLTS. Over 42 to 606 the chain is Lumenal; that stretch reads NSYDSSSSST…LVCQKPFIKK (565 aa). N-linked (GlcNAc...) asparagine glycans are attached at residues N101 and N409.

It belongs to the methyltransferase superfamily.

Its subcellular location is the endoplasmic reticulum membrane. This is Probable methyltransferase PMT5 from Arabidopsis thaliana (Mouse-ear cress).